The primary structure comprises 290 residues: Nucleotide-binding protein XfasM23_0667 (290 aa).

13-20 (GLSGSGKS) serves as a coordination point for ATP. 65 to 68 (DIRS) serves as a coordination point for GTP.

Belongs to the RapZ-like family.

In terms of biological role, displays ATPase and GTPase activities. The chain is Nucleotide-binding protein XfasM23_0667 from Xylella fastidiosa (strain M23).